The chain runs to 1221 residues: DNA-directed RNA polymerase subunit beta' (1221 aa).

Residues Cys-60, Cys-62, Cys-75, and Cys-78 each coordinate Zn(2+). Mg(2+) contacts are provided by Asp-449, Asp-451, and Asp-453. The Zn(2+) site is built by Cys-820, Cys-894, Cys-901, and Cys-904.

Belongs to the RNA polymerase beta' chain family. In terms of assembly, the RNAP catalytic core consists of 2 alpha, 1 beta, 1 beta' and 1 omega subunit. When a sigma factor is associated with the core the holoenzyme is formed, which can initiate transcription. The cofactor is Mg(2+). It depends on Zn(2+) as a cofactor.

The enzyme catalyses RNA(n) + a ribonucleoside 5'-triphosphate = RNA(n+1) + diphosphate. In terms of biological role, DNA-dependent RNA polymerase catalyzes the transcription of DNA into RNA using the four ribonucleoside triphosphates as substrates. The polypeptide is DNA-directed RNA polymerase subunit beta' (Ligilactobacillus salivarius (strain UCC118) (Lactobacillus salivarius)).